The primary structure comprises 141 residues: Vasotocin-neurophysin VT (141 aa).

A disulfide bridge links C1 with C6. Residue G9 is modified to Glycine amide. Cystine bridges form between C22-C66, C25-C39, C33-C56, C40-C46, C73-C85, C79-C97, and C86-C91. N117 is a glycosylation site (N-linked (GlcNAc...) asparagine).

This sequence belongs to the vasopressin/oxytocin family. Post-translationally, seven disulfide bonds are present in neurophysin.

It is found in the secreted. Its function is as follows. Vasotocin is an antidiuretic hormone. The sequence is that of Vasotocin-neurophysin VT from Pelophylax lessonae (Pool frog).